The chain runs to 300 residues: Geranyl diphosphate 2-C-methyltransferase (300 aa).

Positions 1–24 (MAAASAPVPGPGGASSTARGRIPA) are disordered.

It belongs to the geranyl diphosphate 2-C-methyltransferase family. Mg(2+) serves as cofactor.

The catalysed reaction is (2E)-geranyl diphosphate + S-adenosyl-L-methionine = (E)-2-methylgeranyl diphosphate + S-adenosyl-L-homocysteine + H(+). Functionally, catalyzes the SAM-dependent methylation of geranyl diphosphate (GPP) to yield (E)-2-methylgeranyl diphosphate (2-MeGPP). The polypeptide is Geranyl diphosphate 2-C-methyltransferase (gdpmt) (Streptomyces lasalocidi (Streptomyces lasaliensis)).